The following is a 191-amino-acid chain: uncharacterized protein (191 aa).

Positions 3-63 (IDRKKLILEA…EIFTTLLKEM (61 aa)) constitute an HTH tetR-type domain. A DNA-binding region (H-T-H motif) is located at residues 26 to 45 (TMDLVAKLANVGKGTIYTFF).

This is an uncharacterized protein from Bacillus subtilis (strain 168).